Reading from the N-terminus, the 424-residue chain is Dapdiamide A synthase (424 aa).

Positions Gln120–Leu318 constitute an ATP-grasp domain. Ala147–Val209 contributes to the ATP binding site. Mg(2+) contacts are provided by Glu275 and Glu287.

The cofactor is Mg(2+). It depends on Mn(2+) as a cofactor.

The enzyme catalyses 3-[[[(2R,3R)-3-carboxyoxiran-2-yl]carbonyl]amino]-L-alanine + L-valine + ATP = dapdiamide E + ADP + phosphate + H(+). It catalyses the reaction N(3)-fumaramoyl-(S)-2,3-diaminopropanoate + L-valine + ATP = dapdiamide A + ADP + phosphate + H(+). It carries out the reaction N(3)-fumaramoyl-(S)-2,3-diaminopropanoate + L-isoleucine + ATP = dapdiamide B + ADP + phosphate + H(+). The catalysed reaction is N(3)-fumaramoyl-(S)-2,3-diaminopropanoate + L-leucine + ATP = dapdiamide C + ADP + phosphate + H(+). It functions in the pathway antibiotic biosynthesis. Functionally, involved in dapdiamide antibiotics biosynthesis. Ligates N-beta-fumaramoyl-DAP and valine, isoleucine or leucine to form dapdiamides A, B or C, respectively. Also ligates N-beta-epoxysuccinamoyl-DAP and valine to form dapdiamide E. This Enterobacter agglomerans (Erwinia herbicola) protein is Dapdiamide A synthase.